Here is a 175-residue protein sequence, read N- to C-terminus: Alpha-crystallin B chain (175 aa).

M1 bears the N-acetylmethionine mark. A phosphoserine mark is found at S19, S45, and S59. Positions 56–164 (RAPSWIDTGL…PERTIPITRE (109 aa)) constitute a sHSP domain. H83 is a Zn(2+) binding site. An N6-acetyllysine modification is found at K92. 4 residues coordinate Zn(2+): H104, E106, H111, and H119. The interval 145 to 175 (VNGPRKQVSGPERTIPITREEKPAVAAAPKK) is disordered. An N6-acetyllysine modification is found at K166.

The protein belongs to the small heat shock protein (HSP20) family. As to quaternary structure, heteromer composed of three CRYAA and one CRYAB subunits. Aggregates with homologous proteins, including the small heat shock protein HSPB1, to form large heteromeric complexes. Inter-subunit bridging via zinc ions enhances stability, which is crucial as there is no protein turn over in the lens. Interacts with HSPBAP1. Interacts with TTN/titin. Interacts with TMEM109; in the cellular response to DNA damage. Interacts with DES; binds rapidly during early stages of DES filament assembly and a reduced binding seen in the later stages. Interacts with TMED10; the interaction mediates the translocation from the cytoplasm into the ERGIC (endoplasmic reticulum-Golgi intermediate compartment) and thereby secretion. Interacts with ATP6V1A and with MTOR, forming a ternary complex. As to expression, abundantly expressed in the lens of the eye. Expressed in ventricular cardiomyocytes of the heart. Also expressed in skeletal muscle and the kidney.

The protein localises to the cytoplasm. It is found in the cytosol. The protein resides in the nucleus. It localises to the secreted. Its subcellular location is the lysosome. Its function is as follows. May contribute to the transparency and refractive index of the lens. Has chaperone-like activity, preventing aggregation of various proteins under a wide range of stress conditions. In lens epithelial cells, stabilizes the ATP6V1A protein, preventing its degradation by the proteasome. The chain is Alpha-crystallin B chain from Mus musculus (Mouse).